A 391-amino-acid polypeptide reads, in one-letter code: MLKSGLMDTDDQKVGVRVANIDMSERTDNVHLIEIRRIISLVGAAYFFFMTAWVVPVACVITVSLLFPLMLFSTPLFNYLEHKLCAMVNAHWNAVSVFVGATVTEYGTNLAGYAEEKCLLLANHLGLLDHFVLMQSLNGKGSIRSRWMWVIYNIWKYTPLGVMWTSHGNFFVNGGVSKRDSVLSSFRDHLKNSFYKYDYGWVIMYPEGSRLYLVKNSGRTFAEKNGLKPLDNCVYPRTGAAHAVLDVLGPTDDSLSMSKCGKGEPIKYIIDATIGYRKGAVPDICDVMMGDWESVEASQFAVHYDVIPVKPEWSDENLLKEFLYERYIIKDKLLAEFYKTGHFPGDKTKVIPNNYEMMFAQVFWGCLYYAHYVYWLRPLIVHSWTSFLSIF.

2 helical membrane-spanning segments follow: residues 47–67 (FFFMTAWVVPVACVITVSLLF) and 84–104 (LCAMVNAHWNAVSVFVGATVT). Positions 124–129 (HLGLLD) match the HXXXXD motif motif.

This sequence belongs to the 1-acyl-sn-glycerol-3-phosphate acyltransferase family.

The protein localises to the membrane. It carries out the reaction a 1-acyl-sn-glycero-3-phosphate + an acyl-CoA = a 1,2-diacyl-sn-glycero-3-phosphate + CoA. The protein operates within phospholipid metabolism; CDP-diacylglycerol biosynthesis; CDP-diacylglycerol from sn-glycerol 3-phosphate: step 2/3. In terms of biological role, converts lysophosphatidic acid (LPA) into phosphatidic acid by incorporating an acyl moiety at the sn-2 position of the glycerol backbone. In Caenorhabditis elegans, this protein is Putative 1-acyl-sn-glycerol-3-phosphate acyltransferase acl-12 (acl-12).